We begin with the raw amino-acid sequence, 800 residues long: Elongation factor G, mitochondrial (800 aa).

The N-terminal 34 residues, 1 to 34 (MSVHTVMRTQVRSLAGMPKAAMRPLGNSFCARRY), are a transit peptide targeting the mitochondrion. The tr-type G domain maps to 99-385 (SKVRNIGIAA…GICDYLPNPA (287 aa)). GTP contacts are provided by residues 108–115 (AHIDSGKT), 183–187 (DTPGH), and 237–240 (NKMD).

It belongs to the TRAFAC class translation factor GTPase superfamily. Classic translation factor GTPase family. EF-G/EF-2 subfamily.

It is found in the mitochondrion. Its pathway is protein biosynthesis; polypeptide chain elongation. Functionally, mitochondrial GTPase that catalyzes the GTP-dependent ribosomal translocation step during translation elongation. During this step, the ribosome changes from the pre-translocational (PRE) to the post-translocational (POST) state as the newly formed A-site-bound peptidyl-tRNA and P-site-bound deacylated tRNA move to the P and E sites, respectively. Catalyzes the coordinated movement of the two tRNA molecules, the mRNA and conformational changes in the ribosome. The protein is Elongation factor G, mitochondrial of Coccidioides immitis (strain RS) (Valley fever fungus).